The chain runs to 656 residues: Macrolide export ATP-binding/permease protein MacB (656 aa).

Residues 6–244 form the ABC transporter domain; that stretch reads LEVSACYRSF…VKAQVDMSLA (239 aa). Position 42 to 49 (42 to 49) interacts with ATP; the sequence is GASGSGKS. The next 4 membrane-spanning stretches (helical) occupy residues 277-297, 531-551, 586-606, and 621-641; these read FLTM…VALG, LLIS…VMNI, LVCL…GVVF, and SIVA…FLPA.

The protein belongs to the ABC transporter superfamily. Macrolide exporter (TC 3.A.1.122) family. As to quaternary structure, homodimer. Part of the tripartite efflux system MacAB-TolC, which is composed of an inner membrane transporter, MacB, a periplasmic membrane fusion protein, MacA, and an outer membrane component, TolC. The complex forms a large protein conduit and can translocate molecules across both the inner and outer membranes. Interacts with MacA.

The protein localises to the cell inner membrane. In terms of biological role, part of the tripartite efflux system MacAB-TolC. MacB is a non-canonical ABC transporter that contains transmembrane domains (TMD), which form a pore in the inner membrane, and an ATP-binding domain (NBD), which is responsible for energy generation. Confers resistance against macrolides. This is Macrolide export ATP-binding/permease protein MacB from Shewanella oneidensis (strain ATCC 700550 / JCM 31522 / CIP 106686 / LMG 19005 / NCIMB 14063 / MR-1).